A 302-amino-acid chain; its full sequence is Sulfate adenylyltransferase subunit 2 (302 aa).

It belongs to the PAPS reductase family. CysD subfamily. In terms of assembly, heterodimer composed of CysD, the smaller subunit, and CysN.

The enzyme catalyses sulfate + ATP + H(+) = adenosine 5'-phosphosulfate + diphosphate. Its pathway is sulfur metabolism; hydrogen sulfide biosynthesis; sulfite from sulfate: step 1/3. Its function is as follows. With CysN forms the ATP sulfurylase (ATPS) that catalyzes the adenylation of sulfate producing adenosine 5'-phosphosulfate (APS) and diphosphate, the first enzymatic step in sulfur assimilation pathway. APS synthesis involves the formation of a high-energy phosphoric-sulfuric acid anhydride bond driven by GTP hydrolysis by CysN coupled to ATP hydrolysis by CysD. In Shewanella halifaxensis (strain HAW-EB4), this protein is Sulfate adenylyltransferase subunit 2.